A 90-amino-acid chain; its full sequence is Probable Fe(2+)-trafficking protein (90 aa).

Belongs to the Fe(2+)-trafficking protein family.

Its function is as follows. Could be a mediator in iron transactions between iron acquisition and iron-requiring processes, such as synthesis and/or repair of Fe-S clusters in biosynthetic enzymes. This chain is Probable Fe(2+)-trafficking protein, found in Pseudoalteromonas translucida (strain TAC 125).